We begin with the raw amino-acid sequence, 377 residues long: tRNA-specific 2-thiouridylase MnmA (377 aa).

ATP-binding positions include 18–25 (GMSGGVDS) and M44. The segment at 104-106 (NPD) is interaction with target base in tRNA. C109 acts as the Nucleophile in catalysis. A disulfide bridge connects residues C109 and C209. G134 contacts ATP. The segment at 159-161 (KDQ) is interaction with tRNA. C209 acts as the Cysteine persulfide intermediate in catalysis. An interaction with tRNA region spans residues 324 to 325 (RY).

This sequence belongs to the MnmA/TRMU family.

It localises to the cytoplasm. It catalyses the reaction S-sulfanyl-L-cysteinyl-[protein] + uridine(34) in tRNA + AH2 + ATP = 2-thiouridine(34) in tRNA + L-cysteinyl-[protein] + A + AMP + diphosphate + H(+). In terms of biological role, catalyzes the 2-thiolation of uridine at the wobble position (U34) of tRNA, leading to the formation of s(2)U34. The protein is tRNA-specific 2-thiouridylase MnmA of Photobacterium profundum (strain SS9).